We begin with the raw amino-acid sequence, 332 residues long: Fructose-1,6-bisphosphatase class 1 (332 aa).

4 residues coordinate Mg(2+): glutamate 93, aspartate 113, leucine 115, and aspartate 116. Substrate is bound by residues aspartate 116–serine 119, asparagine 209, tyrosine 235, and lysine 272. Glutamate 278 is a Mg(2+) binding site.

This sequence belongs to the FBPase class 1 family. As to quaternary structure, homotetramer. Requires Mg(2+) as cofactor.

Its subcellular location is the cytoplasm. It carries out the reaction beta-D-fructose 1,6-bisphosphate + H2O = beta-D-fructose 6-phosphate + phosphate. It participates in carbohydrate biosynthesis; gluconeogenesis. This chain is Fructose-1,6-bisphosphatase class 1, found in Syntrophus aciditrophicus (strain SB).